Here is a 207-residue protein sequence, read N- to C-terminus: 2,3-bisphosphoglycerate-dependent phosphoglycerate mutase (207 aa).

Substrate contacts are provided by residues 10–17, 23–24, arginine 62, 89–92, lysine 100, 116–117, and 160–161; these read RHGQSEWN, TG, ERDY, RR, and GN. Histidine 11 functions as the Tele-phosphohistidine intermediate in the catalytic mechanism. Glutamate 89 serves as the catalytic Proton donor/acceptor.

It belongs to the phosphoglycerate mutase family. BPG-dependent PGAM subfamily. In terms of assembly, homodimer.

The enzyme catalyses (2R)-2-phosphoglycerate = (2R)-3-phosphoglycerate. The protein operates within carbohydrate degradation; glycolysis; pyruvate from D-glyceraldehyde 3-phosphate: step 3/5. In terms of biological role, catalyzes the interconversion of 2-phosphoglycerate and 3-phosphoglycerate. This chain is 2,3-bisphosphoglycerate-dependent phosphoglycerate mutase, found in Nitrobacter hamburgensis (strain DSM 10229 / NCIMB 13809 / X14).